A 508-amino-acid polypeptide reads, in one-letter code: Matrix metalloproteinase-19 (508 aa).

Residues 1–18 (MNCQQLWLGFLLPMTVSG) form the signal peptide. Positions 19–97 (RVLGLAEVAP…EDPFNQKTLK (79 aa)) are excised as a propeptide. Positions 83–90 (PRCGLEDP) match the Cysteine switch motif. Zn(2+)-binding residues include C85 and H212. The active site involves E213. H216 and H222 together coordinate Zn(2+). The tract at residues 262–288 (IRDEEEEETELPTVPPVPTEPSPMPDP) is disordered. Residues 274 to 287 (TVPPVPTEPSPMPD) are compositionally biased toward pro residues. Hemopexin repeat units lie at residues 286–333 (PDPC…WEGL), 334–380 (PGNL…EPNL), 381–425 (DAAL…FTGV), and 426–472 (PNQP…WMHC). An intrachain disulfide couples C289 to C472. Residue N464 is glycosylated (N-linked (GlcNAc...) asparagine).

The protein belongs to the peptidase M10A family. Zn(2+) is required as a cofactor. Ca(2+) serves as cofactor. Post-translationally, activated by autolytic cleavage after Lys-97. Tyrosine phosphorylated by PKDCC/VLK. As to expression, expressed in mammary gland, placenta, lung, pancreas, ovary, small intestine, spleen, thymus, prostate, testis colon, heart and blood vessel walls. Not detected in brain and peripheral blood leukocytes. Also expressed in the synovial fluid of normal and rheumatoid patients.

It localises to the secreted. Its subcellular location is the extracellular space. The protein localises to the extracellular matrix. With respect to regulation, strongly inhibited by TIMP-2, TIMP-3 and TIMP-4, while TIMP-1 is less efficient. Endopeptidase that degrades various components of the extracellular matrix, such as aggrecan and cartilage oligomeric matrix protein (comp), during development, haemostasis and pathological conditions (arthritic disease). May also play a role in neovascularization or angiogenesis. Hydrolyzes collagen type IV, laminin, nidogen, nascin-C isoform, fibronectin, and type I gelatin. In Homo sapiens (Human), this protein is Matrix metalloproteinase-19 (MMP19).